Reading from the N-terminus, the 184-residue chain is Oligoribonuclease (184 aa).

The Exonuclease domain maps to 8 to 171; it reads LIWIDLEMTG…EDIRESVVEL (164 aa). Tyr129 is an active-site residue.

This sequence belongs to the oligoribonuclease family.

It is found in the cytoplasm. Its function is as follows. 3'-to-5' exoribonuclease specific for small oligoribonucleotides. This Buchnera aphidicola subsp. Acyrthosiphon pisum (strain APS) (Acyrthosiphon pisum symbiotic bacterium) protein is Oligoribonuclease.